Reading from the N-terminus, the 185-residue chain is Probable DNA-directed RNA polymerase subunit delta (185 aa).

The region spanning 14 to 81 is the HTH HARE-type domain; sequence LSMIEVAHAI…GDNTWGLRAW (68 aa). The tract at residues 90–185 is disordered; that stretch reads ATVGENEEDE…DEEDEDEDDE (96 aa). Acidic residues-rich tracts occupy residues 117 to 167 and 175 to 185; these read DTDD…DDGI and HDEEDEDEDDE.

The protein belongs to the RpoE family. As to quaternary structure, RNAP is composed of a core of 2 alpha, a beta and a beta' subunits. The core is associated with a delta subunit and one of several sigma factors.

Participates in both the initiation and recycling phases of transcription. In the presence of the delta subunit, RNAP displays an increased specificity of transcription, a decreased affinity for nucleic acids, and an increased efficiency of RNA synthesis because of enhanced recycling. The sequence is that of Probable DNA-directed RNA polymerase subunit delta from Limosilactobacillus reuteri (strain DSM 20016) (Lactobacillus reuteri).